A 725-amino-acid polypeptide reads, in one-letter code: Methionine--tRNA ligase (725 aa).

A 'HIGH' region motif is present at residues 27–37 (PYANGQIHIGH). Positions 158, 161, 171, and 174 each coordinate Zn(2+). The 'KMSKS' region motif lies at 348–352 (KMSKS). Lysine 351 contacts ATP. One can recognise a tRNA-binding domain in the interval 619 to 725 (DFAKIDLRIA…SGAKPGMRVK (107 aa)).

It belongs to the class-I aminoacyl-tRNA synthetase family. MetG type 1 subfamily. As to quaternary structure, homodimer. Zn(2+) is required as a cofactor.

It is found in the cytoplasm. The catalysed reaction is tRNA(Met) + L-methionine + ATP = L-methionyl-tRNA(Met) + AMP + diphosphate. Is required not only for elongation of protein synthesis but also for the initiation of all mRNA translation through initiator tRNA(fMet) aminoacylation. The sequence is that of Methionine--tRNA ligase from Burkholderia pseudomallei (strain 1106a).